The chain runs to 548 residues: Glucan endo-1,3-beta-glucosidase (548 aa).

Residues 1–36 (MPHDRKNSSRRAWAALCAAVLAVSGALVGVAAPASA) constitute a signal peptide (tat-type signal). The 359-residue stretch at 38–396 (PATIPLTITN…PQAAYIKLDP (359 aa)) folds into the GH64 domain. Glu-153 serves as the catalytic Proton donor. Asp-169 functions as the Proton acceptor in the catalytic mechanism. The region spanning 422–548 (GTGALRIGST…NQTEAQRWTL (127 aa)) is the Ricin B-type lectin domain.

Belongs to the glycosyl hydrolase 64 family. Predicted to be exported by the Tat system. The position of the signal peptide cleavage has not been experimentally proven.

The protein resides in the periplasm. It carries out the reaction Hydrolysis of (1-&gt;3)-beta-D-glucosidic linkages in (1-&gt;3)-beta-D-glucans.. In terms of biological role, lysis of cellular walls containing beta-1,3-glucans. Implicated in the defense against fungal pathogens. This chain is Glucan endo-1,3-beta-glucosidase (glcI), found in Arthrobacter sp. (strain YCWD3).